A 309-amino-acid polypeptide reads, in one-letter code: Taste receptor type 2 member 114 (309 aa).

Residues 1–7 are Extracellular-facing; the sequence is MLSTMEG. A helical membrane pass occupies residues 8-28; the sequence is VLLSVSTSEAVLGIVGNTFIA. The Cytoplasmic portion of the chain corresponds to 29-43; sequence LVNCMDYNRNKKLSN. A helical membrane pass occupies residues 44-64; sequence IGFILTGLAISRICLVLILIT. Residues 65–87 are Extracellular-facing; sequence EAYIKIFYPQLLSPVNIIELISY. Residues 88 to 108 traverse the membrane as a helical segment; the sequence is LWIIICQLNVWFATSLSIFYF. Over 109-127 the chain is Cytoplasmic; the sequence is LKIANFSHYIFVWLKRRID. The helical transmembrane segment at 128-148 threads the bilayer; it reads LVFFFLIGCLLISWLFSFPVV. Topologically, residues 149–182 are extracellular; that stretch reads AKMVKDNKMLYINTSWQIHMKKSELIINYVFTNG. N-linked (GlcNAc...) asparagine glycosylation is present at asparagine 161. The helical transmembrane segment at 183–203 threads the bilayer; it reads GVFLFFMIMLIVCFLLIISLW. The Cytoplasmic portion of the chain corresponds to 204–233; the sequence is RHRRQMESNKLGFRDLNTEVHVRTIKVLLS. Residues 234–254 traverse the membrane as a helical segment; the sequence is FIILFILHFMGITINVICLLI. At 255–259 the chain is on the extracellular side; that stretch reads PESNL. The chain crosses the membrane as a helical span at residues 260 to 280; sequence LFMFGLTTAFIYPGCHSLILI. Residues 281–309 are Cytoplasmic-facing; sequence LANSRLKQCSVMILQLLKCCENGKELRDT.

This sequence belongs to the G-protein coupled receptor T2R family.

The protein localises to the membrane. Its function is as follows. Putative taste receptor which may play a role in the perception of bitterness. This Mus musculus (Mouse) protein is Taste receptor type 2 member 114.